Consider the following 202-residue polypeptide: Probable nicotinate-nucleotide adenylyltransferase (202 aa).

It belongs to the NadD family.

It carries out the reaction nicotinate beta-D-ribonucleotide + ATP + H(+) = deamido-NAD(+) + diphosphate. Its pathway is cofactor biosynthesis; NAD(+) biosynthesis; deamido-NAD(+) from nicotinate D-ribonucleotide: step 1/1. In terms of biological role, catalyzes the reversible adenylation of nicotinate mononucleotide (NaMN) to nicotinic acid adenine dinucleotide (NaAD). This Synechococcus sp. (strain JA-2-3B'a(2-13)) (Cyanobacteria bacterium Yellowstone B-Prime) protein is Probable nicotinate-nucleotide adenylyltransferase.